The following is a 245-amino-acid chain: Eukaryotic translation initiation factor 6 (245 aa).

Tyr-113 is subject to Phosphotyrosine. Position 165 is a phosphothreonine (Thr-165). A Phosphoserine modification is found at Ser-166. Residues Ser-174 and Ser-175 each carry the phosphoserine; by CK1 modification. Phosphoserine; by PKC is present on Ser-235. Ser-239 and Ser-243 each carry phosphoserine.

The protein belongs to the eIF-6 family. As to quaternary structure, monomer. Associates with the 60S ribosomal subunit. Interacts with RACK1. Interacts with DICER1, AGO2, TARBP2, MOV10 and RPL7A; they form a large RNA-induced silencing complex (RISC). Phosphorylation at Ser-174 and Ser-175 by CSNK1D/CK1 promotes nuclear export. Post-translationally, ufmylated by UFL1. Detected in bladder, duodenum, liver, esophagus, pancreas, adipose tissue, megakaryocytes and testis with lower levels in muscle (at protein level).

The protein resides in the cytoplasm. Its subcellular location is the nucleus. It is found in the nucleolus. Its function is as follows. Binds to the 60S ribosomal subunit and prevents its association with the 40S ribosomal subunit to form the 80S initiation complex in the cytoplasm. Behaves as a stimulatory translation initiation factor downstream insulin/growth factors. Is also involved in ribosome biogenesis. Associates with pre-60S subunits in the nucleus and is involved in its nuclear export. Cytoplasmic release of TIF6 from 60S subunits and nuclear relocalization is promoted by a RACK1 (RACK1)-dependent protein kinase C activity. In tissues responsive to insulin, controls fatty acid synthesis and glycolysis by exerting translational control of adipogenic transcription factors such as CEBPB, CEBPD and ATF4 that have G/C rich or uORF in their 5'UTR. Required for ROS-dependent megakaryocyte maturation and platelets formation, controls the expression of mitochondrial respiratory chain genes involved in reactive oxygen species (ROS) synthesis. Involved in miRNA-mediated gene silencing by the RNA-induced silencing complex (RISC). Required for both miRNA-mediated translational repression and miRNA-mediated cleavage of complementary mRNAs by RISC. Modulates cell cycle progression and global translation of pre-B cells, its activation seems to be rate-limiting in tumorigenesis and tumor growth. This Mus musculus (Mouse) protein is Eukaryotic translation initiation factor 6 (Eif6).